Here is a 198-residue protein sequence, read N- to C-terminus: Ribosome maturation factor RimP (198 aa).

The protein belongs to the RimP family.

The protein localises to the cytoplasm. In terms of biological role, required for maturation of 30S ribosomal subunits. This Rhizobium rhizogenes (strain K84 / ATCC BAA-868) (Agrobacterium radiobacter) protein is Ribosome maturation factor RimP.